Consider the following 218-residue polypeptide: Protein-methionine-sulfoxide reductase heme-binding subunit MsrQ (218 aa).

The next 5 membrane-spanning stretches (helical) occupy residues 12-32 (TLIK…LALF), 82-102 (MLGL…LWFD), 118-138 (PFIT…ITST), 150-170 (WQWL…HYWW), and 180-200 (QPII…FWAW).

It belongs to the MsrQ family. In terms of assembly, heterodimer of a catalytic subunit (MsrP) and a heme-binding subunit (MsrQ). FMN is required as a cofactor. Heme b serves as cofactor.

Its subcellular location is the cell inner membrane. Functionally, part of the MsrPQ system that repairs oxidized periplasmic proteins containing methionine sulfoxide residues (Met-O), using respiratory chain electrons. Thus protects these proteins from oxidative-stress damage caused by reactive species of oxygen and chlorine generated by the host defense mechanisms. MsrPQ is essential for the maintenance of envelope integrity under bleach stress, rescuing a wide series of structurally unrelated periplasmic proteins from methionine oxidation. MsrQ provides electrons for reduction to the reductase catalytic subunit MsrP, using the quinone pool of the respiratory chain. This is Protein-methionine-sulfoxide reductase heme-binding subunit MsrQ from Herminiimonas arsenicoxydans.